A 68-amino-acid chain; its full sequence is DNA-directed RNA polymerase subunit omega (68 aa).

It belongs to the RNA polymerase subunit omega family. As to quaternary structure, the RNAP catalytic core consists of 2 alpha, 1 beta, 1 beta' and 1 omega subunit. When a sigma factor is associated with the core the holoenzyme is formed, which can initiate transcription.

The enzyme catalyses RNA(n) + a ribonucleoside 5'-triphosphate = RNA(n+1) + diphosphate. Its function is as follows. Promotes RNA polymerase assembly. Latches the N- and C-terminal regions of the beta' subunit thereby facilitating its interaction with the beta and alpha subunits. The polypeptide is DNA-directed RNA polymerase subunit omega (Ruminiclostridium cellulolyticum (strain ATCC 35319 / DSM 5812 / JCM 6584 / H10) (Clostridium cellulolyticum)).